Consider the following 588-residue polypeptide: Protein kinase C iota type (588 aa).

The PB1 domain maps to 18 to 101 (QVRVKAYYRG…SELIIHVFPC (84 aa)). A Phorbol-ester/DAG-type zinc finger spans residues 133–183 (GHAFQAKRFNRRAHCAICTDRIWGLGRQGYKCINCKLLVHKKCHKLVTVEC). The interval 194–213 (GRIDPGSTHPEHPDQVLGKK) is disordered. Residues 246–514 (FDLLRVIGRG…FADIMAHPFF (269 aa)) enclose the Protein kinase domain. Residues 252-260 (IGRGSYAKV) and K275 contribute to the ATP site. The active-site Proton acceptor is the D370. Residues T404 and T556 each carry the phosphothreonine modification. The 72-residue stretch at 515-586 (RNVDWDLMEQ…INPLLMSAEE (72 aa)) folds into the AGC-kinase C-terminal domain.

It belongs to the protein kinase superfamily. AGC Ser/Thr protein kinase family. PKC subfamily.

It carries out the reaction L-seryl-[protein] + ATP = O-phospho-L-seryl-[protein] + ADP + H(+). The catalysed reaction is L-threonyl-[protein] + ATP = O-phospho-L-threonyl-[protein] + ADP + H(+). With respect to regulation, exhibits an elevated basal enzymatic activity and is not regulated by diacylglycerol, phosphatidylserine, phorbol esters or calcium ions. Two specific sites, Thr-404 (activation loop of the kinase domain) and Thr-556 (turn motif), need to be phosphorylated for its full activation. Its function is as follows. Calcium- and diacylglycerol-independent serine/ threonine-protein kinase that plays a general protective role against apoptotic stimuli, is involved in NF-kappa-B activation, cell survival, differentiation and polarity, and contributes to the regulation of microtubule dynamics in the early secretory pathway. Is required for the formation and maintenance of the zonula adherens during early epithelial development and plays a critical role in organ morphogenesis and in regulating the orientation of cell division. Required for polarized epithelial organization, myocardium coherence and cell connectivity in the early somite stages. Required for heart cone tilt and development of circulatory architecture during embryogenesis. This chain is Protein kinase C iota type (prkci), found in Danio rerio (Zebrafish).